The sequence spans 426 residues: Histidine--tRNA ligase (426 aa).

It belongs to the class-II aminoacyl-tRNA synthetase family. In terms of assembly, homodimer.

It localises to the cytoplasm. It catalyses the reaction tRNA(His) + L-histidine + ATP = L-histidyl-tRNA(His) + AMP + diphosphate + H(+). This chain is Histidine--tRNA ligase, found in Streptococcus equi subsp. zooepidemicus (strain H70).